A 457-amino-acid chain; its full sequence is uncharacterized protein (457 aa).

One can recognise a TRAM domain in the interval 6–64 (PVHKGEVLDVTIMDLTYQGMGVAKVDNYPIFIENALPEEKITVKVTKTTKNFAFGDVEK). The S-adenosyl-L-methionine site is built by glutamine 287, tyrosine 316, glutamate 337, and aspartate 385. Cysteine 412 functions as the Nucleophile in the catalytic mechanism.

This sequence belongs to the class I-like SAM-binding methyltransferase superfamily. RNA M5U methyltransferase family.

This is an uncharacterized protein from Lactiplantibacillus plantarum (strain ATCC BAA-793 / NCIMB 8826 / WCFS1) (Lactobacillus plantarum).